Reading from the N-terminus, the 258-residue chain is 3-deoxy-manno-octulosonate cytidylyltransferase (258 aa).

The protein belongs to the KdsB family.

The protein localises to the cytoplasm. It carries out the reaction 3-deoxy-alpha-D-manno-oct-2-ulosonate + CTP = CMP-3-deoxy-beta-D-manno-octulosonate + diphosphate. Its pathway is nucleotide-sugar biosynthesis; CMP-3-deoxy-D-manno-octulosonate biosynthesis; CMP-3-deoxy-D-manno-octulosonate from 3-deoxy-D-manno-octulosonate and CTP: step 1/1. It participates in bacterial outer membrane biogenesis; lipopolysaccharide biosynthesis. In terms of biological role, activates KDO (a required 8-carbon sugar) for incorporation into bacterial lipopolysaccharide in Gram-negative bacteria. The chain is 3-deoxy-manno-octulosonate cytidylyltransferase from Gemmatimonas aurantiaca (strain DSM 14586 / JCM 11422 / NBRC 100505 / T-27).